The sequence spans 377 residues: Phosphoserine aminotransferase (377 aa).

Residue Arg-43 participates in L-glutamate binding. Positions 105, 164, 189, and 212 each coordinate pyridoxal 5'-phosphate. Lys-213 is subject to N6-(pyridoxal phosphate)lysine. Residue 254-255 (NT) participates in pyridoxal 5'-phosphate binding.

This sequence belongs to the class-V pyridoxal-phosphate-dependent aminotransferase family. SerC subfamily. In terms of assembly, homodimer. Pyridoxal 5'-phosphate serves as cofactor.

Its subcellular location is the cytoplasm. It carries out the reaction O-phospho-L-serine + 2-oxoglutarate = 3-phosphooxypyruvate + L-glutamate. The enzyme catalyses 4-(phosphooxy)-L-threonine + 2-oxoglutarate = (R)-3-hydroxy-2-oxo-4-phosphooxybutanoate + L-glutamate. Its pathway is amino-acid biosynthesis; L-serine biosynthesis; L-serine from 3-phospho-D-glycerate: step 2/3. The protein operates within cofactor biosynthesis; pyridoxine 5'-phosphate biosynthesis; pyridoxine 5'-phosphate from D-erythrose 4-phosphate: step 3/5. Its function is as follows. Catalyzes the reversible conversion of 3-phosphohydroxypyruvate to phosphoserine and of 3-hydroxy-2-oxo-4-phosphonooxybutanoate to phosphohydroxythreonine. This is Phosphoserine aminotransferase from Bordetella bronchiseptica (strain ATCC BAA-588 / NCTC 13252 / RB50) (Alcaligenes bronchisepticus).